An 822-amino-acid chain; its full sequence is uncharacterized protein (822 aa).

A disordered region spans residues 1–230; that stretch reads MARGKRSTQR…NAAPLNKTDA (230 aa). S27 is subject to Phosphoserine. Residues 34–44 are compositionally biased toward basic residues; it reads SKAKKNKKKLN. Phosphoserine is present on residues S47, S51, and S55. Position 57 is a phosphotyrosine (Y57). Over residues 61 to 70 the composition is skewed to acidic residues; that stretch reads PEDDEVDEEV. A compositionally biased stretch (basic residues) spans 73–85; sequence VKKKPSKKSKKAK. The segment covering 92–106 has biased composition (acidic residues); the sequence is FADEQSVEEEEEEDS. Position 97 is a phosphoserine (S97). Over residues 111–121 the composition is skewed to basic residues; that stretch reads RKNKKSSKKAS. Acidic residues-rich tracts occupy residues 129–144 and 163–172; these read LADDMDDLSLDEEESE and SEALDDGDIE. A phosphoserine mark is found at S137 and S163. ABC transporter domains lie at 276–519 and 594–809; these read LQVE…VQLA and IKFQ…AKER. Residues 308–315 and 627–634 each bind ATP; these read APNGSGKS and GPNGAGKT.

The protein belongs to the ABC transporter superfamily.

The protein localises to the cytoplasm. This is an uncharacterized protein from Schizosaccharomyces pombe (strain 972 / ATCC 24843) (Fission yeast).